Here is a 171-residue protein sequence, read N- to C-terminus: 3-hydroxydecanoyl-[acyl-carrier-protein] dehydratase (171 aa).

Residue H70 is part of the active site.

It belongs to the thioester dehydratase family. FabA subfamily. In terms of assembly, homodimer.

The protein resides in the cytoplasm. It carries out the reaction a (3R)-hydroxyacyl-[ACP] = a (2E)-enoyl-[ACP] + H2O. The catalysed reaction is (3R)-hydroxydecanoyl-[ACP] = (2E)-decenoyl-[ACP] + H2O. It catalyses the reaction (2E)-decenoyl-[ACP] = (3Z)-decenoyl-[ACP]. It participates in lipid metabolism; fatty acid biosynthesis. Necessary for the introduction of cis unsaturation into fatty acids. Catalyzes the dehydration of (3R)-3-hydroxydecanoyl-ACP to E-(2)-decenoyl-ACP and then its isomerization to Z-(3)-decenoyl-ACP. Can catalyze the dehydratase reaction for beta-hydroxyacyl-ACPs with saturated chain lengths up to 16:0, being most active on intermediate chain length. This is 3-hydroxydecanoyl-[acyl-carrier-protein] dehydratase from Shewanella denitrificans (strain OS217 / ATCC BAA-1090 / DSM 15013).